Reading from the N-terminus, the 302-residue chain is Acetylglutamate kinase (302 aa).

Substrate-binding positions include 73-74, R95, and N200; that span reads GG.

This sequence belongs to the acetylglutamate kinase family. ArgB subfamily.

It localises to the cytoplasm. The enzyme catalyses N-acetyl-L-glutamate + ATP = N-acetyl-L-glutamyl 5-phosphate + ADP. Its pathway is amino-acid biosynthesis; L-arginine biosynthesis; N(2)-acetyl-L-ornithine from L-glutamate: step 2/4. Functionally, catalyzes the ATP-dependent phosphorylation of N-acetyl-L-glutamate. The sequence is that of Acetylglutamate kinase from Sphingopyxis alaskensis (strain DSM 13593 / LMG 18877 / RB2256) (Sphingomonas alaskensis).